The following is a 280-amino-acid chain: L-aspartate dehydrogenase (280 aa).

Positions 134 and 202 each coordinate NAD(+). His-232 is an active-site residue.

Belongs to the L-aspartate dehydrogenase family.

It carries out the reaction L-aspartate + NADP(+) + H2O = oxaloacetate + NH4(+) + NADPH + H(+). It catalyses the reaction L-aspartate + NAD(+) + H2O = oxaloacetate + NH4(+) + NADH + H(+). The protein operates within cofactor biosynthesis; NAD(+) biosynthesis; iminoaspartate from L-aspartate (dehydrogenase route): step 1/1. Functionally, specifically catalyzes the NAD or NADP-dependent dehydrogenation of L-aspartate to iminoaspartate. In Bradyrhizobium diazoefficiens (strain JCM 10833 / BCRC 13528 / IAM 13628 / NBRC 14792 / USDA 110), this protein is L-aspartate dehydrogenase.